We begin with the raw amino-acid sequence, 315 residues long: tRNA dimethylallyltransferase (315 aa).

An ATP-binding site is contributed by 10–17 (GPTASGKS). Residue 12–17 (TASGKS) coordinates substrate. Residues 35–38 (DSMQ) form an interaction with substrate tRNA region.

This sequence belongs to the IPP transferase family. As to quaternary structure, monomer. The cofactor is Mg(2+).

It catalyses the reaction adenosine(37) in tRNA + dimethylallyl diphosphate = N(6)-dimethylallyladenosine(37) in tRNA + diphosphate. Catalyzes the transfer of a dimethylallyl group onto the adenine at position 37 in tRNAs that read codons beginning with uridine, leading to the formation of N6-(dimethylallyl)adenosine (i(6)A). This is tRNA dimethylallyltransferase from Thermoanaerobacter pseudethanolicus (strain ATCC 33223 / 39E) (Clostridium thermohydrosulfuricum).